Here is a 149-residue protein sequence, read N- to C-terminus: Transcriptional repressor NrdR (149 aa).

A zinc finger lies at 3 to 34 (CPFCQSDDTKVLDTRLIDDGSQVRRRRECVSC). The ATP-cone domain occupies 49–139 (PHLIKSDDSR…VYRQFQDIEA (91 aa)).

Belongs to the NrdR family. It depends on Zn(2+) as a cofactor.

Its function is as follows. Negatively regulates transcription of bacterial ribonucleotide reductase nrd genes and operons by binding to NrdR-boxes. The protein is Transcriptional repressor NrdR of Ruthia magnifica subsp. Calyptogena magnifica.